Here is a 238-residue protein sequence, read N- to C-terminus: Arginine ABC transporter permease protein ArtQ (238 aa).

At 1-14 the chain is on the periplasmic side; that stretch reads MNEFFPLASAAGMT. The ABC transmembrane type-1 domain maps to 11–223; that stretch reads AGMTVGLAVC…VITLLSQYIL (213 aa). A helical transmembrane segment spans residues 15-35; that stretch reads VGLAVCALIVGLALAMFFAVW. The Cytoplasmic segment spans residues 36-48; that stretch reads ESAKWRPVAWAGS. The helical transmembrane segment at 49 to 69 threads the bilayer; the sequence is ALVTILRGLPEILVVLFIYFG. Residues 70–98 lie on the Periplasmic side of the membrane; the sequence is SSQLLLTLSDGFTINLGFVQIPVQMDIEN. Residues 99–119 traverse the membrane as a helical segment; sequence FDVSPFLCGVIALSLLYAAYA. The Cytoplasmic segment spans residues 120–168; the sequence is SQTLRGALKAVPVGQWESGQALGLSKSAIFFRLVMPQMWRHALPGLGNQ. Residues 169 to 189 traverse the membrane as a helical segment; that stretch reads WLVLLKDTALVSLISVNDLML. Residues 190-201 are Periplasmic-facing; sequence QTKSIATRTQEP. A helical transmembrane segment spans residues 202 to 222; that stretch reads FTWYIVAAAIYLVITLLSQYI. The Cytoplasmic portion of the chain corresponds to 223–238; the sequence is LKRIDLRATRFERRPS.

Belongs to the binding-protein-dependent transport system permease family. HisMQ subfamily. The complex is composed of two ATP-binding proteins (ArtP), two transmembrane proteins (ArtM and ArtQ) and two solute-binding proteins (ArtJ and ArtI).

It is found in the cell inner membrane. Part of the ABC transporter complex ArtPIQMJ involved in arginine transport. Probably responsible for the translocation of the substrate across the membrane. The protein is Arginine ABC transporter permease protein ArtQ (artQ) of Escherichia coli O6:H1 (strain CFT073 / ATCC 700928 / UPEC).